The chain runs to 171 residues: Der GTPase-activating protein YihI (171 aa).

Disordered stretches follow at residues 1–99 (MKKP…QAEL) and 145–171 (LSYD…RGGN). The span at 20–30 (TREELNQEARD) shows a compositional bias: basic and acidic residues. A compositionally biased stretch (basic residues) spans 31-40 (RKRLKKHRGH). Acidic residues predominate over residues 147–160 (YDDDEEDDEEDEKQ).

This sequence belongs to the YihI family. In terms of assembly, interacts with Der.

A GTPase-activating protein (GAP) that modifies Der/EngA GTPase function. May play a role in ribosome biogenesis. The polypeptide is Der GTPase-activating protein YihI (Salmonella agona (strain SL483)).